A 153-amino-acid polypeptide reads, in one-letter code: Superoxide dismutase [Cu-Zn] (153 aa).

Residues His46, His48, and His63 each contribute to the Cu cation site. Residues Cys57 and Cys146 are joined by a disulfide bond. Positions 61-80 (GPHFNPFGKEHGAPEDENRH) are disordered. Positions 63, 71, 80, and 83 each coordinate Zn(2+). Residues 68–80 (GKEHGAPEDENRH) show a composition bias toward basic and acidic residues. His120 lines the Cu cation pocket. Positions 124–136 (DDLGRSEHPESKK) are enriched in basic and acidic residues. The interval 124 to 143 (DDLGRSEHPESKKTGNAGAR) is disordered. Position 143 (Arg143) interacts with substrate.

Belongs to the Cu-Zn superoxide dismutase family. In terms of assembly, homodimer. Cu cation serves as cofactor. The cofactor is Zn(2+).

It localises to the cytoplasm. The enzyme catalyses 2 superoxide + 2 H(+) = H2O2 + O2. In terms of biological role, destroys radicals which are normally produced within the cells and which are toxic to biological systems. This is Superoxide dismutase [Cu-Zn] (sodC) from Aspergillus flavus.